A 237-amino-acid polypeptide reads, in one-letter code: MIKNLPQIVLLNIVGLALFLSWYIPVNHGFWLPIDADIFYFFNQKLVESKAFLWLVALTNNRAFDGCSLLAMGMLMLSFWLKENAPGRRRIVIIGLVMLLTAVVLNQLGQALIPVKRASPTLTFTDINRVSELLSVPTKDASRDSFPGDHGMMLLIFSAFMWRYFGKVAGLIALIIFVVFAFPRVMIGAHWFTDIIVGSMTVILIGLPWVLLTPLSDRLITFFDKSLPGKNKHFQNK.

At 1 to 5 (MIKNL) the chain is on the cytoplasmic side. A helical membrane pass occupies residues 6–26 (PQIVLLNIVGLALFLSWYIPV). The Periplasmic portion of the chain corresponds to 27-62 (NHGFWLPIDADIFYFFNQKLVESKAFLWLVALTNNR). The chain crosses the membrane as a helical span at residues 63 to 83 (AFDGCSLLAMGMLMLSFWLKE). Residues 84–90 (NAPGRRR) are Cytoplasmic-facing. A helical transmembrane segment spans residues 91-111 (IVIIGLVMLLTAVVLNQLGQA). Topologically, residues 112-145 (LIPVKRASPTLTFTDINRVSELLSVPTKDASRDS) are periplasmic. Position 167 (lysine 167) is a topological domain, cytoplasmic. Residues 168–188 (VAGLIALIIFVVFAFPRVMIG) traverse the membrane as a helical segment. Topologically, residues 189–194 (AHWFTD) are periplasmic. Residues 195–215 (IIVGSMTVILIGLPWVLLTPL) traverse the membrane as a helical segment. Residues 216-237 (SDRLITFFDKSLPGKNKHFQNK) lie on the Cytoplasmic side of the membrane.

Belongs to the LpxT phosphotransferase family.

It is found in the cell inner membrane. It carries out the reaction di-trans,octa-cis-undecaprenyl diphosphate + alpha-Kdo-(2-&gt;4)-alpha-Kdo-(2-&gt;6)-lipid A (E. coli) = (Kdo)2-lipid A 1-diphosphate + di-trans,octa-cis-undecaprenyl phosphate. The protein operates within bacterial outer membrane biogenesis; lipopolysaccharide biosynthesis. Its activity is regulated as follows. Inhibited by BasR. This regulation does not occur at the level of transcription, but rather following the assembly of LpxT into the inner membrane. In terms of biological role, involved in the modification of the lipid A domain of lipopolysaccharides (LPS). Transfers a phosphate group from undecaprenyl pyrophosphate (C55-PP) to lipid A to form lipid A 1-diphosphate. Contributes to the recycling of undecaprenyl phosphate (C55-P). In vitro, has low undecaprenyl-diphosphate phosphatase activity. The polypeptide is Lipid A 1-diphosphate synthase (Escherichia coli (strain K12)).